The sequence spans 63 residues: Large ribosomal subunit protein uL30 (63 aa).

This sequence belongs to the universal ribosomal protein uL30 family. As to quaternary structure, part of the 50S ribosomal subunit.

In Bradyrhizobium sp. (strain ORS 278), this protein is Large ribosomal subunit protein uL30.